Here is a 353-residue protein sequence, read N- to C-terminus: Draxin-B (353 aa).

The signal sequence occupies residues 1 to 21 (MASSWCLPLALLVSNLAVSHS). 3 disordered regions span residues 23–183 (EPSS…KEGS), 198–222 (TVMSEHPPMLPPASTKPKKSGRGKV), and 246–268 (VDAWPSSRKKDKRRSKNLSSGNV). Basic residues predominate over residues 138–167 (GPHKGKAQGHGHHFDHRRHGGRRDKGRHTK). Residues 252–261 (SRKKDKRRSK) show a composition bias toward basic residues. Residues Asn-262 and Asn-267 are each glycosylated (N-linked (GlcNAc...) asparagine).

This sequence belongs to the draxin family.

The protein resides in the secreted. In terms of biological role, chemorepulsive axon guidance protein required for the development of spinal cord and forebrain commissures. Acts as a chemorepulsive guidance protein for commissural axons during development. Able to inhibit or repel neurite outgrowth from dorsal spinal cord. This chain is Draxin-B (draxin-B), found in Salmo salar (Atlantic salmon).